Consider the following 268-residue polypeptide: Nickel import ATP-binding protein NikE (268 aa).

Residues 4 to 252 (LNISGLSHHY…SSDAGRVLQN (249 aa)) enclose the ABC transporter domain. An ATP-binding site is contributed by 45–52 (GRSGCGKS).

Belongs to the ABC transporter superfamily. Nickel importer (TC 3.A.1.5.3) family. In terms of assembly, the complex is composed of two ATP-binding proteins (NikD and NikE), two transmembrane proteins (NikB and NikC) and a solute-binding protein (NikA).

The protein localises to the cell inner membrane. It catalyses the reaction Ni(2+)(out) + ATP + H2O = Ni(2+)(in) + ADP + phosphate + H(+). Its function is as follows. Part of the ABC transporter complex NikABCDE involved in nickel import. Responsible for energy coupling to the transport system. In Escherichia coli (strain K12), this protein is Nickel import ATP-binding protein NikE.